Consider the following 309-residue polypeptide: Mitochondrial fission regulator 1-like (309 aa).

The disordered stretch occupies residues 189–221; sequence DVTEEDEEEEEEEDREEEEEDVSELVPDPMPPV. Residues 190–211 are compositionally biased toward acidic residues; that stretch reads VTEEDEEEEEEEDREEEEEDVS. Serine 253 is modified (phosphoserine).

This sequence belongs to the MTFR1 family.

It is found in the mitochondrion outer membrane. Mitochondrial protein required for adaptation of miochondrial dynamics to metabolic changes. Regulates mitochondrial morphology at steady state and mediates AMPK-dependent stress-induced mitochondrial fragmentation via the control of OPA1 levels. The chain is Mitochondrial fission regulator 1-like (mtfr1l) from Danio rerio (Zebrafish).